A 318-amino-acid polypeptide reads, in one-letter code: MFGVTLAELSASLGDPVLALGLAAFALLLLAIPISFWMVSGGSNSAVVTLLVALANLVLTAQLVLRWWQSGHFPISNLYESLCFLAWACTLAQLLVERSLSSPIVSAAATPMALLCVAFASFALPETLQEASPLVPALRSSWLVMHVSVIMCSYAALLVGSFLSMAVLFTDRQQTLELRSSSIGTGGFRQAKLATSAIDQNDGLRLSSINLSRTEQLDSLSYRTITVGFLLLTLGLISGAVWANEAWGSWWSWDPKETWALICWMVYAAYLHTRFSRGWSGRRPALVAVAGIVVIVVCYIGVNLLGIGLHSYGWFFEA.

Helical transmembrane passes span 17–37, 45–65, 75–95, 104–124, 149–169, 224–244, 258–275, and 287–307; these read VLAL…ISFW, SAVV…QLVL, ISNL…AQLL, IVSA…SFAL, VIMC…AVLF, TITV…VWAN, TWAL…HTRF, and VAVA…LLGI.

It belongs to the CcmF/CycK/Ccl1/NrfE/CcsA family. In terms of assembly, may interact with ccs1.

The protein localises to the cellular thylakoid membrane. Required during biogenesis of c-type cytochromes (cytochrome c6 and cytochrome f) at the step of heme attachment. The polypeptide is Cytochrome c biogenesis protein CcsA (Prochlorococcus marinus (strain MIT 9303)).